Reading from the N-terminus, the 87-residue chain is UPF0250 protein Spro_1197 (87 aa).

Belongs to the UPF0250 family.

The sequence is that of UPF0250 protein Spro_1197 from Serratia proteamaculans (strain 568).